We begin with the raw amino-acid sequence, 181 residues long: Adenine phosphoribosyltransferase (181 aa).

The protein belongs to the purine/pyrimidine phosphoribosyltransferase family. In terms of assembly, homodimer.

The protein localises to the cytoplasm. It catalyses the reaction AMP + diphosphate = 5-phospho-alpha-D-ribose 1-diphosphate + adenine. The protein operates within purine metabolism; AMP biosynthesis via salvage pathway; AMP from adenine: step 1/1. In terms of biological role, catalyzes a salvage reaction resulting in the formation of AMP, that is energically less costly than de novo synthesis. In Drosophila pseudoobscura pseudoobscura (Fruit fly), this protein is Adenine phosphoribosyltransferase (Aprt).